Consider the following 461-residue polypeptide: Glyceraldehyde-3-phosphate dehydrogenase-like protein (461 aa).

The residue at position 421 (Thr-421) is a Phosphothreonine.

Belongs to the glyceraldehyde-3-phosphate dehydrogenase family.

The sequence is that of Glyceraldehyde-3-phosphate dehydrogenase-like protein (gap2) from Pseudomonas aeruginosa (strain UCBPP-PA14).